We begin with the raw amino-acid sequence, 178 residues long: Transcription termination/antitermination protein NusG (178 aa).

Residues 126 to 156 (VGQQVRVNEGPFADFNGVVEEVNYERNKLRV) enclose the KOW domain.

It belongs to the NusG family.

Functionally, participates in transcription elongation, termination and antitermination. The sequence is that of Transcription termination/antitermination protein NusG from Neisseria meningitidis serogroup B (strain ATCC BAA-335 / MC58).